Consider the following 637-residue polypeptide: 3D-(3,5/4)-trihydroxycyclohexane-1,2-dione hydrolase (637 aa).

Position 65 (Glu65) interacts with thiamine diphosphate. Positions 441–521 (SLPGDLQRLW…INVLLFDNSG (81 aa)) are thiamine pyrophosphate binding. The Mg(2+) site is built by Asp492 and Asn519.

This sequence belongs to the TPP enzyme family. It depends on Mg(2+) as a cofactor. Requires thiamine diphosphate as cofactor.

The enzyme catalyses 3D-3,5/4-trihydroxycyclohexane-1,2-dione + H2O = 5-deoxy-D-glucuronate + H(+). Its pathway is polyol metabolism; myo-inositol degradation into acetyl-CoA; acetyl-CoA from myo-inositol: step 3/7. Involved in the cleavage of the C1-C2 bond of 3D-(3,5/4)-trihydroxycyclohexane-1,2-dione (THcHDO) to yield 5-deoxy-glucuronate (5DG). This Halalkalibacterium halodurans (strain ATCC BAA-125 / DSM 18197 / FERM 7344 / JCM 9153 / C-125) (Bacillus halodurans) protein is 3D-(3,5/4)-trihydroxycyclohexane-1,2-dione hydrolase.